The following is a 46-amino-acid chain: Mu-segestritoxin-Sf1g (46 aa).

4 disulfide bridges follow: Cys-3–Cys-19, Cys-10–Cys-22, Cys-18–Cys-42, and Cys-24–Cys-40. A keys region for toxin activity region spans residues Arg-31–Trp-33.

This sequence belongs to the neurotoxin 16 (SFI) family. As to expression, expressed by the venom gland.

Its subcellular location is the secreted. Functionally, insecticidal toxin. It inhibits insect voltage-gated sodium channels (Nav) by partially blocking the channel pore in DUM neurons from the American cockroach, not by acting as a gating modifier. The inhibition is only partially reversible after prolonged washout. In vivo, the toxin causes flaccid paralysis followed by death when injected into Heliothis virescens larvae. It also causes uncoordinated movements followed by full paralysis to sheep blowflies (Lucilia cuprina). When the toxin is fused to snowdrop lectin, it is orally active against larvae of the tomato moth (Laconobia oleracea), the rice brown planthopper (Nilaparvata lugens), and the peach-potato aphid (Myzus persicae). This is Mu-segestritoxin-Sf1g from Segestria florentina (Tube-web spider).